The following is a 266-amino-acid chain: 3-methyl-2-oxobutanoate hydroxymethyltransferase 2 (266 aa).

The Mg(2+) site is built by Asp45 and Asp84. Residues 45–46, Asp84, and Lys112 each bind 3-methyl-2-oxobutanoate; that span reads DS. Residue Glu114 coordinates Mg(2+). Glu181 acts as the Proton acceptor in catalysis.

Belongs to the PanB family. In terms of assembly, homodecamer; pentamer of dimers. Mg(2+) is required as a cofactor.

It is found in the cytoplasm. It catalyses the reaction 3-methyl-2-oxobutanoate + (6R)-5,10-methylene-5,6,7,8-tetrahydrofolate + H2O = 2-dehydropantoate + (6S)-5,6,7,8-tetrahydrofolate. It functions in the pathway cofactor biosynthesis; (R)-pantothenate biosynthesis; (R)-pantoate from 3-methyl-2-oxobutanoate: step 1/2. In terms of biological role, catalyzes the reversible reaction in which hydroxymethyl group from 5,10-methylenetetrahydrofolate is transferred onto alpha-ketoisovalerate to form ketopantoate. The protein is 3-methyl-2-oxobutanoate hydroxymethyltransferase 2 of Pseudomonas aeruginosa (strain UCBPP-PA14).